Reading from the N-terminus, the 158-residue chain is 6,7-dimethyl-8-ribityllumazine synthase (158 aa).

Residues Phe-23, Ser-61–Glu-63, and Ala-85–Ile-87 contribute to the 5-amino-6-(D-ribitylamino)uracil site. Glu-90–Thr-91 contacts (2S)-2-hydroxy-3-oxobutyl phosphate. Catalysis depends on His-93, which acts as the Proton donor. Residue Phe-118 participates in 5-amino-6-(D-ribitylamino)uracil binding. Arg-132 serves as a coordination point for (2S)-2-hydroxy-3-oxobutyl phosphate.

Belongs to the DMRL synthase family.

The catalysed reaction is (2S)-2-hydroxy-3-oxobutyl phosphate + 5-amino-6-(D-ribitylamino)uracil = 6,7-dimethyl-8-(1-D-ribityl)lumazine + phosphate + 2 H2O + H(+). The protein operates within cofactor biosynthesis; riboflavin biosynthesis; riboflavin from 2-hydroxy-3-oxobutyl phosphate and 5-amino-6-(D-ribitylamino)uracil: step 1/2. Functionally, catalyzes the formation of 6,7-dimethyl-8-ribityllumazine by condensation of 5-amino-6-(D-ribitylamino)uracil with 3,4-dihydroxy-2-butanone 4-phosphate. This is the penultimate step in the biosynthesis of riboflavin. This chain is 6,7-dimethyl-8-ribityllumazine synthase, found in Prochlorococcus marinus (strain MIT 9215).